Here is a 539-residue protein sequence, read N- to C-terminus: Chaperone Ric-8A (539 aa).

This sequence belongs to the synembryn family.

The protein localises to the cytoplasm. Its subcellular location is the cell cortex. Functionally, chaperone that specifically binds and folds nascent G alpha proteins prior to G protein heterotrimer formation, promoting their stability and activity: folds GNAI1, GNAO1, GNA13 and GNAQ. Does not fold G(s) G-alpha proteins GNAS nor GNAL. Also acts as a guanine nucleotide exchange factor (GEF) for G alpha proteins by stimulating exchange of bound GDP for free GTP. This Xenopus tropicalis (Western clawed frog) protein is Chaperone Ric-8A (ric8a).